We begin with the raw amino-acid sequence, 434 residues long: Oxysterol-binding protein homolog 5 (434 aa).

Residues 18–371 (SSFNGDLSSL…KQVDYMNENT (354 aa)) are OSBP-related domain (ORD). 24–29 (LSSLSA) is an a 1,2-diacyl-sn-glycero-3-phospho-(1D-myo-inositol 4-phosphate) binding site. Q96 contacts 20-hydroxycholesterol. Residue Q96 coordinates 25-hydroxycholesterol. Positions 96 and 100 each coordinate 7beta-hydroxycholesterol. Residue Q96 participates in cholesterol binding. Position 96 (Q96) interacts with ergosterol. Residues 109 to 112 (KPLN), 143 to 144 (HH), K335, E339, and R343 each bind a 1,2-diacyl-sn-glycero-3-phospho-(1D-myo-inositol 4-phosphate). S389 is modified (phosphoserine).

Belongs to the OSBP family.

The protein localises to the vacuole membrane. Its subcellular location is the bud neck. Functionally, lipid transport protein (LTP) involved in non-vesicular transfer of lipids between membranes. Functions in phosphoinositide-coupled directional transport of various lipids by carrying the lipid molecule in a hydrophobic pocket and transferring it between membranes through the cytosol. Involved in maintenance of intracellular sterol distribution and homeostasis. Plays a role in ergosterol synthesis. Binds and transports sterol. May be involved in ergosterol transport from the plasma membrane (PM) to the ER. This chain is Oxysterol-binding protein homolog 5, found in Saccharomyces cerevisiae (strain ATCC 204508 / S288c) (Baker's yeast).